A 257-amino-acid polypeptide reads, in one-letter code: 5'-nucleotidase SurE (257 aa).

Residues D13, D14, S44, and N100 each coordinate a divalent metal cation.

Belongs to the SurE nucleotidase family. A divalent metal cation is required as a cofactor.

It is found in the cytoplasm. It carries out the reaction a ribonucleoside 5'-phosphate + H2O = a ribonucleoside + phosphate. Its function is as follows. Nucleotidase that shows phosphatase activity on nucleoside 5'-monophosphates. This Phocaeicola vulgatus (strain ATCC 8482 / DSM 1447 / JCM 5826 / CCUG 4940 / NBRC 14291 / NCTC 11154) (Bacteroides vulgatus) protein is 5'-nucleotidase SurE.